The primary structure comprises 532 residues: Chondroitin sulfate N-acetylgalactosaminyltransferase 1 (532 aa).

Topologically, residues 1–14 (MMMVRRGLLAWISR) are cytoplasmic. The chain crosses the membrane as a helical; Signal-anchor for type II membrane protein span at residues 15 to 35 (VVVLLVLLCCAISVLYMLACT). Topologically, residues 36–532 (PKGDEEQLAL…QKQKTSSKKT (497 aa)) are lumenal. Positions 57-100 (YQAVLQEWEEQHRNYVSSLKRQIAQLKEELQERSEQLRNGQYQA) form a coiled coil. N-linked (GlcNAc...) asparagine glycans are attached at residues Asn-315 and Asn-324. Residues Asp-360 and His-477 each coordinate a divalent metal cation.

The protein belongs to the chondroitin N-acetylgalactosaminyltransferase family. Post-translationally, N-glycosylated. Ubiquitous, with the highest levels in placenta, thyroid, bladder, prostate and adrenal gland. Detected at low levels in the other tissues examined.

The protein resides in the golgi apparatus. It localises to the golgi stack membrane. The catalysed reaction is 3-O-(beta-D-GlcA-(1-&gt;3)-beta-D-Gal-(1-&gt;3)-beta-D-Gal-(1-&gt;4)-beta-D-Xyl)-L-seryl-[protein] + UDP-N-acetyl-alpha-D-galactosamine = 3-O-(beta-D-GalNAc-(1-&gt;4)-beta-D-GlcA-(1-&gt;3)-beta-D-Gal-(1-&gt;3)-beta-D-Gal-(1-&gt;4)-beta-D-Xyl)-L-seryl-[protein] + UDP + H(+). Functionally, transfers 1,4-N-acetylgalactosamine (GalNAc) from UDP-GalNAc to the non-reducing end of glucuronic acid (GlcUA). Required for addition of the first GalNAc to the core tetrasaccharide linker and for elongation of chondroitin chains. Important role in chondroitin chain biosynthesis in cartilage formation and subsequent endochondral ossification. Moreover, is involved in the metabolism of aggrecan. In Homo sapiens (Human), this protein is Chondroitin sulfate N-acetylgalactosaminyltransferase 1.